Reading from the N-terminus, the 501-residue chain is Acetylcholine receptor subunit beta (501 aa).

The N-terminal stretch at 1–23 (MALGALLLLLGVLGTPLAPGARG) is a signal peptide. The Extracellular portion of the chain corresponds to 24–244 (SEAEGQLIKK…VIFYLIIRRK (221 aa)). The cysteines at positions 151 and 165 are disulfide-linked. Asn164 carries an N-linked (GlcNAc...) asparagine glycan. 3 consecutive transmembrane segments (helical) span residues 245–269 (PLFY…VFYL), 277–295 (MGLS…LLLA), and 311–332 (YLMF…VLNL). Topologically, residues 333–469 (HHRSPHTHQM…WQFVAMVVDR (137 aa)) are cytoplasmic. Residues 362-382 (RPKPERDQLPEPHHSLSPRSG) are disordered. Over residues 363–375 (PKPERDQLPEPHH) the composition is skewed to basic and acidic residues. Residue Tyr390 is modified to Phosphotyrosine; by Tyr-kinases. A helical membrane pass occupies residues 470–488 (LFLWTFIVFTSVGTLVIFL).

This sequence belongs to the ligand-gated ion channel (TC 1.A.9) family. Acetylcholine receptor (TC 1.A.9.1) subfamily. Beta-1/CHRNB1 sub-subfamily. In terms of assembly, pentamer of two alpha chains, and one each of the beta, delta, and gamma (in immature muscle) or epsilon (in mature muscle) chains. The muscle heteropentamer composed of alpha-1, beta-1, delta, epsilon subunits interacts with the alpha-conotoxin ImII.

The protein localises to the postsynaptic cell membrane. Its subcellular location is the cell membrane. The enzyme catalyses K(+)(in) = K(+)(out). It carries out the reaction Na(+)(in) = Na(+)(out). Functionally, after binding acetylcholine, the AChR responds by an extensive change in conformation that affects all subunits and leads to opening of an ion-conducting channel across the plasma membrane. The sequence is that of Acetylcholine receptor subunit beta (Chrnb1) from Mus musculus (Mouse).